Here is a 255-residue protein sequence, read N- to C-terminus: Large ribosomal subunit protein uL4 (255 aa).

It belongs to the universal ribosomal protein uL4 family. In terms of assembly, part of the 50S ribosomal subunit.

Its function is as follows. One of the primary rRNA binding proteins, this protein initially binds near the 5'-end of the 23S rRNA. It is important during the early stages of 50S assembly. It makes multiple contacts with different domains of the 23S rRNA in the assembled 50S subunit and ribosome. Functionally, forms part of the polypeptide exit tunnel. This chain is Large ribosomal subunit protein uL4, found in Thermococcus gammatolerans (strain DSM 15229 / JCM 11827 / EJ3).